The following is a 383-amino-acid chain: Presenilin-associated rhomboid-like protein A, mitochondrial (383 aa).

The N-terminal 37 residues, 1 to 37, are a transit peptide targeting the mitochondrion; sequence MAWRSCFMKWTQINSINASSLCPKSTRLNIHPQQRCG. A disordered region spans residues 35–75; sequence RCGFRKTERPSESKKGVQETEAEAGGHNRAVPPKPVPPLPP. The Mitochondrial matrix portion of the chain corresponds to 38–83; that stretch reads FRKTERPSESKKGVQETEAEAGGHNRAVPPKPVPPLPPRRPHQLFR. A compositionally biased stretch (basic and acidic residues) spans 39–52; sequence RKTERPSESKKGVQ. The segment covering 66-75 has biased composition (pro residues); that stretch reads PPKPVPPLPP. Residues 84-104 form a helical membrane-spanning segment; the sequence is PLVFTVGFTGCSFGAAAILQY. The Mitochondrial intermembrane portion of the chain corresponds to 105-168; the sequence is ESVKSRVQLA…FWSGLSEGQK (64 aa). A helical transmembrane segment spans residues 169-189; that stretch reads TVTGIIALNTVVLCCWRVPAM. Residues 190 to 219 are Mitochondrial matrix-facing; that stretch reads QRFLVKYFTSNPASKTRCLPMVLSSFSHYS. Residues 220-240 form a helical membrane-spanning segment; the sequence is VIHMVVNMYVLWTFSSSIVSL. Over 241–245 the chain is Mitochondrial intermembrane; that stretch reads LGREQ. A helical transmembrane segment spans residues 246 to 266; the sequence is FLALYLSGGVISTFVSYVFKT. The Mitochondrial matrix portion of the chain corresponds to 267 to 271; it reads ATGRL. The chain crosses the membrane as a helical span at residues 272 to 292; that stretch reads GPSLGASGSIMTVLAAVCTKI. Serine 278 acts as the Nucleophile in catalysis. The Mitochondrial intermembrane portion of the chain corresponds to 293–298; the sequence is PEAKLG. A helical membrane pass occupies residues 299-319; sequence IVLLPVISFSAGNALKALVAL. Residues 320 to 334 lie on the Mitochondrial matrix side of the membrane; sequence DIAGLVLGWRFFDHA. The helical transmembrane segment at 335–355 threads the bilayer; sequence AHLGGALFGVWYIGYGHELIW. The active site involves histidine 336. Topologically, residues 356–383 are mitochondrial intermembrane; it reads RKREPLIKFWHELRNMSPGRPGPGGGGG.

The protein belongs to the peptidase S54 family.

It is found in the mitochondrion inner membrane. It catalyses the reaction Cleaves type-1 transmembrane domains using a catalytic dyad composed of serine and histidine that are contributed by different transmembrane domains.. Required for the control of apoptosis during postnatal growth. Essential for proteolytic processing of an antiapoptotic form of opa1 which prevents the release of mitochondrial cytochrome c in response to intrinsic apoptotic signals. The chain is Presenilin-associated rhomboid-like protein A, mitochondrial (parla) from Danio rerio (Zebrafish).